Reading from the N-terminus, the 135-residue chain is Nitrogen fixation protein NifU 1 (135 aa).

The segment covering 1–10 has biased composition (basic and acidic residues); that stretch reads MRDMQDDDTK. The disordered stretch occupies residues 1 to 29; that stretch reads MRDMQDDDTKSPAPPPAAAAAARRAAGQA. The span at 18–29 shows a compositional bias: low complexity; it reads AAAAARRAAGQA.

Belongs to the NifU family.

May be involved in the formation or repair of [Fe-S] clusters present in iron-sulfur proteins. This Rhodobacter capsulatus (Rhodopseudomonas capsulata) protein is Nitrogen fixation protein NifU 1 (nifU1).